The sequence spans 693 residues: Elongation factor G (693 aa).

Residues 8–282 form the tr-type G domain; the sequence is EKTRNIGIMA…AVIDYLPSPL (275 aa). Residues 17 to 24, 81 to 85, and 135 to 138 contribute to the GTP site; these read AHVDAGKT, DTPGH, and NKMD.

It belongs to the TRAFAC class translation factor GTPase superfamily. Classic translation factor GTPase family. EF-G/EF-2 subfamily.

Its subcellular location is the cytoplasm. Functionally, catalyzes the GTP-dependent ribosomal translocation step during translation elongation. During this step, the ribosome changes from the pre-translocational (PRE) to the post-translocational (POST) state as the newly formed A-site-bound peptidyl-tRNA and P-site-bound deacylated tRNA move to the P and E sites, respectively. Catalyzes the coordinated movement of the two tRNA molecules, the mRNA and conformational changes in the ribosome. The polypeptide is Elongation factor G (Streptococcus pneumoniae serotype 2 (strain D39 / NCTC 7466)).